Reading from the N-terminus, the 301-residue chain is NDP-polyphosphate phosphotransferase 3 (301 aa).

The span at Met1 to Arg12 shows a compositional bias: basic and acidic residues. Residues Met1–Ile21 are disordered.

Belongs to the polyphosphate kinase 2 (PPK2) family. Class I subfamily. Requires Mg(2+) as cofactor.

It catalyses the reaction [phosphate](n) + ATP = [phosphate](n+1) + ADP. The catalysed reaction is [phosphate](n) + CTP = [phosphate](n+1) + CDP. It carries out the reaction [phosphate](n) + GTP = [phosphate](n+1) + GDP. The enzyme catalyses [phosphate](n) + UTP = [phosphate](n+1) + UDP. Uses inorganic polyphosphate (polyP) as a donor to convert NDP to NTP. PolyP hydrolysis is slightly faster with UDP, but it can also use ADP, GDP and CDP. This chain is NDP-polyphosphate phosphotransferase 3, found in Ruegeria pomeroyi (strain ATCC 700808 / DSM 15171 / DSS-3) (Silicibacter pomeroyi).